The following is a 225-amino-acid chain: Deoxyribose-phosphate aldolase (225 aa).

Aspartate 96 functions as the Proton donor/acceptor in the catalytic mechanism. Lysine 157 acts as the Schiff-base intermediate with acetaldehyde in catalysis. Lysine 185 (proton donor/acceptor) is an active-site residue.

Belongs to the DeoC/FbaB aldolase family. DeoC type 1 subfamily.

The protein localises to the cytoplasm. The enzyme catalyses 2-deoxy-D-ribose 5-phosphate = D-glyceraldehyde 3-phosphate + acetaldehyde. Its pathway is carbohydrate degradation; 2-deoxy-D-ribose 1-phosphate degradation; D-glyceraldehyde 3-phosphate and acetaldehyde from 2-deoxy-alpha-D-ribose 1-phosphate: step 2/2. Catalyzes a reversible aldol reaction between acetaldehyde and D-glyceraldehyde 3-phosphate to generate 2-deoxy-D-ribose 5-phosphate. The sequence is that of Deoxyribose-phosphate aldolase from Microcystis aeruginosa (strain NIES-843 / IAM M-2473).